Reading from the N-terminus, the 378-residue chain is UPF0725 protein At1g23970 (378 aa).

It belongs to the UPF0725 (EMB2204) family.

The polypeptide is UPF0725 protein At1g23970 (Arabidopsis thaliana (Mouse-ear cress)).